The primary structure comprises 236 residues: Small ribosomal subunit protein uS2c (236 aa).

Belongs to the universal ribosomal protein uS2 family.

It is found in the plastid. The protein resides in the chloroplast. The polypeptide is Small ribosomal subunit protein uS2c (rps2) (Carica papaya (Papaya)).